The primary structure comprises 465 residues: MDQENFHGSSLPQQLQNLHIQPQQASPNPVQTGFAPRRHYNNLVGLGNGNAVSGSPVKGAPLGQRHVKLKKEKISAQVAQLSQPGQLQLSDVGDPALAGGSGLQGGVGLMGVILPSDEALKFVSETDANGLAMKTPVSILQELLSRRGITPGYELVQIEGAIHEPTFRFRVSFKDKDTPFTAMGAGRSKKEAKHAAARALIDKLIGAQLPESPSSSAGPSVTGLTVAGSGGDGNANATGGGDASDKTVGNPIGWLQEMCMQRRWPPPSYETETEVGLPHERLFTIACSILNYREMGKGKSKKIAKRLAAHRMWMRLQETPIDSGKISDSICGELEGEPRSSENYYGELKDISVPTLTTQHSNKVSQFHKTLKNATGKKLLKLQKTCLKNNKIDYIKLLGEIATENQFEVTYVDIEEKTFSGQFQCLVQLSTLPVGVCHGSGPTAADAQRHAAQNALEYLKIMTKK.

The tract at residues 1–337 (MDQENFHGSS…DSICGELEGE (337 aa)) is necessary for enhancing pre-miRNA processing by Dcr-1. A not required for interaction with Dcr-1 region spans residues 1 to 379 (MDQENFHGSS…TLKNATGKKL (379 aa)). The important for homodimerization and interaction with Dcr-1 stretch occupies residues 1-392 (MDQENFHGSS…QKTCLKNNKI (392 aa)). The tract at residues 129–211 (NGLAMKTPVS…DKLIGAQLPE (83 aa)) is sufficient for binding RNA. A necessary for promoting preferential binding of Dcr-2 to the less stably base paired ends of siRNAs region spans residues 129 to 322 (NGLAMKTPVS…WMRLQETPID (194 aa)). Positions 135–206 (TPVSILQELL…ARALIDKLIG (72 aa)) constitute a DRBM 1 domain. An enables simultaneous binding of both DRBM 1 and 2 domains to dsRNA region spans residues 209-249 (LPESPSSSAGPSVTGLTVAGSGGDGNANATGGGDASDKTVG). The interval 210 to 246 (PESPSSSAGPSVTGLTVAGSGGDGNANATGGGDASDK) is disordered. Positions 211-223 (ESPSSSAGPSVTG) are enriched in polar residues. Positions 220-465 (SVTGLTVAGS…LEYLKIMTKK (246 aa)) are necessary and sufficient for enhancing processing of pre-miRNAs by Dcr-1. Over residues 228–242 (GSGGDGNANATGGGD) the composition is skewed to gly residues. Positions 245 to 322 (DKTVGNPIGW…WMRLQETPID (78 aa)) are sufficient for binding RNA. The 69-residue stretch at 250 to 318 (NPIGWLQEMC…AHRMWMRLQE (69 aa)) folds into the DRBM 2 domain. A necessary for binding pre-miRNA region spans residues 308–309 (AA). The tract at residues 338 to 359 (PRSSENYYGELKDISVPTLTTQ) is required for binding to Dcr-2 and to fully enhance Dcr-2 mediated cleavage of 3' overhanging termini (3'ovr) and blunt termini (BLT) dsRNAs. However, this region is dispensable for binding the dsRNA substrates. Residues 340 to 465 (SSENYYGELK…LEYLKIMTKK (126 aa)) are necessary for interaction with Dcr-1. The sufficent for binding to Dcr-1 stretch occupies residues 392–463 (IDYIKLLGEI…NALEYLKIMT (72 aa)). The 69-residue stretch at 393 to 461 (DYIKLLGEIA…AQNALEYLKI (69 aa)) folds into the DRBM 3 domain.

In terms of assembly, homodimer. As to quaternary structure, interacts with dicer enzyme Dcr-1. Component of the miRNA-directed RNA-induced loading complex (miRLC), composed of at least Dcr-1, AGO1 and loqs isoform PB (loqs-PB), which processes pre-miRNAs and loads the resulting miRNAs into the Argonaute 1 (AGO1)-containing RNA-induced silencing complex (miRISC) to target the selective destruction of homologous RNAs. Interacts (via DRBM 3 domain) with dicer enzyme Dcr-1 (via helicase domain). Different regions of the Dcr-1-loqs-PB heterodimer collaborate to recognize, bind and position the pre-miRNA for Dcr-1 mediated cleavage. In the absence of miRNA substrates, the heterodimer favors a closed, catalytically incompetent, conformation, whereas binding of authentic pre-miRNA substrates stabilizes the relatively rare open, catalytically competent, conformation of the heterodimer. During substrate recognition, the Dcr-1 PAZ domain and pre-miRNA interact with the DRBM 1 domain of loqs-PB, which likely contributes to substrate recognition and stabilization. At the miRNA binding stage, the Dcr-1 DRBM domain and the loqs-PB DRBM domains then bind the pre-miRNA in tandem to form a tight 'belt' around the pre-miRNA stem, the pre-miRNA loop is docked in the loop-binding region formed by DUF283, DRBM and part of the helicase domain of Dcr-1, and the loqs-PB DRBM 1 and the wing domain of Dcr-1 act together to bind the 5' and 3' pre-miRNA termini within the PAZ and platform domains of Dcr-1. These interactions between the proteins and their pre-miRNA substrate stabilize a distorted form of the pre-miRNA and position the scissile phosphodiester bonds of the pre-miRNA at the RNase III catalytic cleavage sites of Dcr-1. Following Dcr-1 mediated cleavage, the miRNA duplex remains bound to loqs-PB DRBM 1, which dissociates from the Dcr-1 RNase III 1 domain but remains in contact with the PAZ and wing domains suggesting that the heterodimer presents the mature miRNA to AGO2 for loading into the RNA-induced silencing complex (miRISC). In terms of assembly, able to interact with dicer enzyme Dcr-1. However, the relevance of such an interaction is unclear in vivo and another report found that it did not interact with Dcr-1. As to quaternary structure, monomer. Interacts (via C-terminus) with dicer enzyme Dcr-2 (via N-terminus); interaction is required for RNAi activity in producing siRNAs from a subset of endo- and exo-dsRNAs, and in the alternative siRLC, the interaction enhances the binding preference of the protein for the thermodynamically more stable ends of endogenous siRNAs. Interaction with Dcr-2 is RNA independent, however the isoform must bind both dsRNA and Dcr-2 to enhance Dcr-2 cleavage activity. Does not interact with Dcr-1. In terms of tissue distribution, strong expression in males and females. Expression in ovaries is relatively weak. As to expression, strong expression in females and relatively weak expression in males. Strong expression in ovaries.

The protein localises to the cytoplasm. It localises to the cytosol. In terms of biological role, double-stranded RNA-binding protein which can function in gene silencing by acting with Dcr-1 to enhance its ATP-independent processing of a specific subset of precursor micro-RNAs (pre-miRNAs) to mature miRNAs. Some reports found it was able to enhance the efficiency of pre-miRNA processing by Dcr-1, and can shift the cleavage site of Dcr-1 altering the length of the mature miRNAs produced by Dcr-1 alone. However, in contrast to isoform PB, it is not necessary or sufficient for enhancing miRNA biogenesis, and is not required for development or female germline stem cell (GSC) maintenance. Another report also found that it decreases binding of Dcr-1 to the miRNA substrate let-7. Functionally, double-stranded RNA-binding protein which functions in gene silencing by acting with Dcr-1 to enhance its ATP-independent processing of a specific subset of precursor micro-RNAs (pre-miRNAs) to mature miRNAs. Function is essential for development and female germline stem cell (GSC) maintenance. Functions in miRNA-mediated gene silencing by enhancing the binding affinity and specific pre-miRNA processing activity of Dcr-1, and as part of the loqs-PB-Dcr-1 complex, is involved in substrate discrimination, correctly positioning the pre-miRNA in the Dcr-1 catalytic center for cleavage, and miRNA loading into the Argonaute 1 (Ago1)-containing RNA-induced silencing complex (miRISC). Increases the binding affinity of Dcr-1 to pre-miRNAs, thereby increasing dicing efficiency and broadening the range of substrates that can be processed by the dicer. It may also confer the substrate specificity of Dcr-1 towards pre-miRNAs, as in its absence Dcr-1 displays siRNA-generating activity towards long dsRNA substrates. It can also shift the cleavage site of Dcr-1 for a small number of pre-miRNAs, changing the length of the mature miRNAs produced by Dcr-1 alone. Increases the range of pre-miRNAs that can be processed by Dcr-1, by enhancing the dicing of suboptimal hairpin substrates including ones with mismatches at the dicing site. This function may also promote the generation of novel miRNA genes as it appears to have an important role in processing evolutionarily young miRNA genes, suggesting that it may also enhance dicing of substrates that have not acquired hairpin features required for efficient miRNA processing. As newly emerged miRNAs can have deleterious or beneficial effects on fitness, this function is likely part of a regulatory system that prevents excessive emergence of active miRNA genes and thus keeps them within an optimal range. Also forms a RISC loading complex (miRLC) with Dcr-1 to mediate Ago1-loading of mature miRNAs into the RNA-induced silencing complex (miRISC). In female ovaries, required for Dcr-1 to generate the twenty-three nucleotide isomiR variant of miR-307a which is able to repress its targets Gk2 and tara. Its function is as follows. Double-stranded RNA-binding protein which has an essential role in gene silencing (RNAi) by acting with Dcr-2 to enhance its ATP-dependent processing of a subset of endogenous (endo) and exogenous (exo) dsRNAs into short interfering RNAs (siRNAs). Functions in RNAi by increasing the initial binding affinity of Dcr-2 to certain dsRNA substrates, and in the absence of r2d2, may also function in siRNA loading into the Argonaute 2 (AGO2)-containing RNA-induced silencing complex (siRISC) and guide strand selection for target silencing by the siRISC. Promotes Dcr-2 cleavage of a subset of dsRNAs, including endo-dsRNAs derived from convergent transcription, inverted repeats and transposons. Also enables Dcr-2 to produce hairpin-derived endo-siRNAs in the presence of cellular inhibitory inorganic phosphate, likely by increasing the binding affinity of the enzyme to the hairpin dsRNAs allowing the dsRNA to displace phosphate bound to Dcr-2. According to many reports, the cleavage reaction mode of Dcr-2 changes according to the termini of the dsRNA substrate, with the enzyme displaying a preference for processing blunt termini (BLT), likely non-self dsRNAs, over dsRNAs with 2 nucleotides 3' overhanging (3'ovr) termini, which are typically the structure of endo-dsRNAs. According to many reports, interaction with Loqs-PD modifies the molecular recognition mechanisms of Dcr-2 towards sub-optimal 3'ovr dsRNA substrates and thus enables the dicer to cleave endo-dsRNA templates with diverse termini. However, according to another report, the mode of cleavage reaction is not affected by the presence or absence of loqs-PD. In the absence of r2d2, may also form an alternative RISC loading complex (siRLC) with Dcr-2 to mediate AGO2-loading of endo- and exo-siRNAs into the RNA-induced silencing complex (siRISC). Many reports suggest that loqs-PD and r2d2 function independently with dcr-2 in distinct siRNA pathways, and may even compete for binding to the enzyme. Loaded siRNAs serve as a guide to direct the siRISC to complementary RNAs to degrade them or prevent their translation. The siRLC plays an important role in the ATP-dependent asymmetry sensing of the duplex, and is therefore also responsible for the selection of the strand that ultimately acts as the guide siRNA for the siRISC. Thermodynamically asymmetric endo-siRNAs can be pre-oriented in the siRLC by the Loqs-PD and DCr-2 complex, which preferentially binds to the most thermodynamically stable strand prior to loading into the siRISC. Appears to be involved in promoting double-strand breaks (DSBs) following exposure to a low-dose/dose-rate (LDR) of ionizing radiation. This Drosophila melanogaster (Fruit fly) protein is Protein Loquacious.